A 64-amino-acid polypeptide reads, in one-letter code: UPF0337 protein SH2043 (64 aa).

The tract at residues 1–64 (MAEDKFEQAK…DKVKGNNDNK (64 aa)) is disordered. Positions 22–64 (DNKDLEKEGQNDKASGKAKEAVENVKNKANDLIDKVKGNNDNK) are enriched in basic and acidic residues.

It belongs to the UPF0337 (CsbD) family.

This Staphylococcus haemolyticus (strain JCSC1435) protein is UPF0337 protein SH2043.